The sequence spans 119 residues: Chorion class CA protein ERA.1 (119 aa).

A signal peptide spans 1 to 21; that stretch reads MSTFAVLLLCVQACLIQNVYS. The segment at 22-55 is left arm; it reads QCLGRVGPGGPPLGPYGGPLGGPGYGPVGYGGCG. Residues 56–103 are central domain; that stretch reads GYGGSGIGNVAVAGELPVAGSTGVMGQVPVIGAVEFAGPACAVGSVSI. The tract at residues 104–119 is right arm; that stretch reads SGACGPTCGCGGSPYY.

It belongs to the chorion protein family.

In terms of biological role, this protein is one of many from the eggshell of the silk moth. This chain is Chorion class CA protein ERA.1 (ERA.1), found in Bombyx mori (Silk moth).